The following is a 443-amino-acid chain: Probable glycine dehydrogenase (decarboxylating) subunit 1 (443 aa).

The protein belongs to the GcvP family. N-terminal subunit subfamily. In terms of assembly, the glycine cleavage system is composed of four proteins: P, T, L and H. In this organism, the P 'protein' is a heterodimer of two subunits.

It carries out the reaction N(6)-[(R)-lipoyl]-L-lysyl-[glycine-cleavage complex H protein] + glycine + H(+) = N(6)-[(R)-S(8)-aminomethyldihydrolipoyl]-L-lysyl-[glycine-cleavage complex H protein] + CO2. The glycine cleavage system catalyzes the degradation of glycine. The P protein binds the alpha-amino group of glycine through its pyridoxal phosphate cofactor; CO(2) is released and the remaining methylamine moiety is then transferred to the lipoamide cofactor of the H protein. The protein is Probable glycine dehydrogenase (decarboxylating) subunit 1 of Nitratidesulfovibrio vulgaris (strain DSM 19637 / Miyazaki F) (Desulfovibrio vulgaris).